A 715-amino-acid chain; its full sequence is Transcription activator of gluconeogenesis MGYG_02011 (715 aa).

The span at 1–14 (MSPHQTTGQESDNM) shows a compositional bias: polar residues. Positions 1 to 28 (MSPHQTTGQESDNMAVNGENAPASSQYI) are disordered. The segment at residues 66–94 (CYACQRGHLTCGDERPCQRCIKRGFQDAC) is a DNA-binding region (zn(2)-C6 fungal-type). 4 stretches are compositionally biased toward polar residues: residues 129-166 (QNNV…PQNK), 179-191 (YASQ…TYQI), 203-223 (SLPQ…GQFN), and 362-385 (MMTT…RPNA). Disordered regions lie at residues 129 to 223 (QNNV…GQFN), 354 to 414 (SPAS…RRRH), 534 to 569 (NHNV…NSST), and 628 to 663 (GSNG…NGRG). Low complexity predominate over residues 386–400 (SVSQQRQQPVVSTPQ). Polar residues-rich tracts occupy residues 535-554 (HNVN…SRGS) and 639-649 (GEASSSEANEL). Residues 650-662 (NGSNANGATTNGR) show a composition bias toward low complexity.

This sequence belongs to the ERT1/acuK family.

Its subcellular location is the nucleus. Functionally, transcription factor which regulates nonfermentable carbon utilization. Activator of gluconeogenetic genes. This chain is Transcription activator of gluconeogenesis MGYG_02011, found in Arthroderma gypseum (strain ATCC MYA-4604 / CBS 118893) (Microsporum gypseum).